Consider the following 629-residue polypeptide: DNA-directed RNA polymerase III subunit rpc3 (629 aa).

Disordered regions lie at residues 136-164 (ANGV…SNEQ), 247-294 (PRGA…EMGY), and 373-420 (QLDL…SGGN). A compositionally biased stretch (basic and acidic residues) spans 257-268 (RRADEPNKKCRT). Residues 272-293 (SVDENDEHDEEEENEWSDDEMG) show a composition bias toward acidic residues. Residues 374–388 (LDLSSSTGPMDSSQP) are compositionally biased toward polar residues. Positions 389–409 (DGRRGKRPWDGDVEGTNHEEA) are enriched in basic and acidic residues. The interval 556-577 (TYKAMSRCLQRLRFERSRIKDF) is leucine-zipper.

This sequence belongs to the RNA polymerase beta chain family. Component of the RNA polymerase III (Pol III) complex consisting of 17 subunits.

It localises to the nucleus. In terms of biological role, DNA-dependent RNA polymerase catalyzes the transcription of DNA into RNA using the four ribonucleoside triphosphates as substrates. Specific core component of RNA polymerase III which synthesizes small RNAs, such as 5S rRNA and tRNAs. The protein is DNA-directed RNA polymerase III subunit rpc3 (rpc82) of Aspergillus fumigatus (strain ATCC MYA-4609 / CBS 101355 / FGSC A1100 / Af293) (Neosartorya fumigata).